The primary structure comprises 78 residues: Small ribosomal subunit protein uS17 (78 aa).

This sequence belongs to the universal ribosomal protein uS17 family. As to quaternary structure, part of the 30S ribosomal subunit.

One of the primary rRNA binding proteins, it binds specifically to the 5'-end of 16S ribosomal RNA. The polypeptide is Small ribosomal subunit protein uS17 (Pelagibacter ubique (strain HTCC1062)).